We begin with the raw amino-acid sequence, 366 residues long: tRNA/tmRNA (uracil-C(5))-methyltransferase (366 aa).

5 residues coordinate S-adenosyl-L-methionine: Q190, Y218, N223, E239, and D299. The active-site Nucleophile is C324. The active-site Proton acceptor is E358.

Belongs to the class I-like SAM-binding methyltransferase superfamily. RNA M5U methyltransferase family. TrmA subfamily.

It carries out the reaction uridine(54) in tRNA + S-adenosyl-L-methionine = 5-methyluridine(54) in tRNA + S-adenosyl-L-homocysteine + H(+). It catalyses the reaction uridine(341) in tmRNA + S-adenosyl-L-methionine = 5-methyluridine(341) in tmRNA + S-adenosyl-L-homocysteine + H(+). In terms of biological role, dual-specificity methyltransferase that catalyzes the formation of 5-methyluridine at position 54 (m5U54) in all tRNAs, and that of position 341 (m5U341) in tmRNA (transfer-mRNA). The protein is tRNA/tmRNA (uracil-C(5))-methyltransferase of Shigella flexneri serotype 5b (strain 8401).